Consider the following 105-residue polypeptide: UPF0148 protein PYRAB12700 (105 aa).

This sequence belongs to the UPF0148 family.

The chain is UPF0148 protein PYRAB12700 from Pyrococcus abyssi (strain GE5 / Orsay).